The sequence spans 163 residues: Probable histone H2A.4 (163 aa).

Disordered stretches follow at residues 1–30 (MEVG…VSRS) and 134–163 (SAAA…AAAA). Over residues 12–21 (GAGGRRGGGG) the composition is skewed to gly residues. Basic residues predominate over residues 147–163 (KSPKKATTKSPKKAAAA). Short sequence motifs (SPKK motif) lie at residues 148–151 (SPKK) and 156–159 (SPKK).

Belongs to the histone H2A family. The nucleosome is a histone octamer containing two molecules each of H2A, H2B, H3 and H4 assembled in one H3-H4 heterotetramer and two H2A-H2B heterodimers. The octamer wraps approximately 147 bp of DNA.

Its subcellular location is the nucleus. It is found in the chromosome. Core component of nucleosome. Nucleosomes wrap and compact DNA into chromatin, limiting DNA accessibility to the cellular machineries which require DNA as a template. Histones thereby play a central role in transcription regulation, DNA repair, DNA replication and chromosomal stability. DNA accessibility is regulated via a complex set of post-translational modifications of histones, also called histone code, and nucleosome remodeling. The protein is Probable histone H2A.4 of Oryza sativa subsp. indica (Rice).